Reading from the N-terminus, the 511-residue chain is uncharacterized protein (511 aa).

Positions 13-45 constitute a LisH domain; sequence IYDALNMLVYDYLLKMKYEGSAKIFFNEAGLEN. Residues 172–212 form a disordered region; sequence PRFEEQGVPPAKMAPKQFRDEGRSGNVESPSIATNQEGSSP. Residues 197–210 are compositionally biased toward polar residues; it reads NVESPSIATNQEGS.

This is an uncharacterized protein from Encephalitozoon cuniculi (strain GB-M1) (Microsporidian parasite).